The chain runs to 248 residues: Gamma-interferon-inducible lysosomal thiol reductase (248 aa).

Positions 1-26 are cleaved as a signal peptide; sequence MSWSPILPFLSLLLLLFPLEVPRAAT. A propeptide spans 27–54 (removed in mature form); the sequence is ASLSQASSEGTTTCKAHDVCLLGPRPLP. An intrachain disulfide couples C69 to C72. N-linked (GlcNAc...) asparagine glycosylation is found at N92 and N105. Residues 231-248 constitute a propeptide, removed in mature form; it reads KPDICSSIADSPRKVCYK.

Belongs to the GILT family. In terms of assembly, dimer; disulfide-linked. Post-translationally, N-glycosylated. Sugar chains contain mannose-6-phosphate. In terms of processing, synthesized as a 35 kDa precursor which is then processed into the mature 30 kDa form via cleavage of N-terminal and C-terminal propeptides. Processing of the precursor is mediated by multiple lysosomal proteases.

The protein localises to the secreted. The protein resides in the lysosome. Functionally, lysosomal thiol reductase that can reduce protein disulfide bonds. May facilitate the complete unfolding of proteins destined for lysosomal degradation. Plays an important role in antigen processing. Facilitates the generation of MHC class II-restricted epitodes from disulfide bond-containing antigen by the endocytic reduction of disulfide bonds. Also facilitates MHC class I-restricted recognition of exogenous antigens containing disulfide bonds by CD8+ T-cells or crosspresentation. The protein is Gamma-interferon-inducible lysosomal thiol reductase (Ifi30) of Mus musculus (Mouse).